The primary structure comprises 150 residues: Cell division protein SepF (150 aa).

This sequence belongs to the SepF family. In terms of assembly, homodimer. Interacts with FtsZ.

It localises to the cytoplasm. In terms of biological role, cell division protein that is part of the divisome complex and is recruited early to the Z-ring. Probably stimulates Z-ring formation, perhaps through the cross-linking of FtsZ protofilaments. Its function overlaps with FtsA. In Clostridium botulinum (strain ATCC 19397 / Type A), this protein is Cell division protein SepF.